The primary structure comprises 87 residues: Scorpine-like peptide Tco 41.46-2 (87 aa).

The first 19 residues, 1–19 (MERKLALLLFLGMVTLASC), serve as a signal peptide directing secretion. The BetaSPN-type CS-alpha/beta domain maps to 53-87 (QFGCPAYEGYCNNHCQDIERKDGECHGFKCKCAKD). 3 disulfides stabilise this stretch: Cys-56–Cys-77, Cys-63–Cys-82, and Cys-67–Cys-84.

The protein belongs to the long chain scorpion toxin family. Class 1 subfamily. In terms of tissue distribution, expressed by the venom gland.

It is found in the secreted. May have antibacterial activity. Its function is as follows. Inhibits voltage-gated potassium channel. In terms of biological role, does not induce hemolytic activity, lactate dehydrogenase (LDH) release from mast cells, mast cell degranulation, and antimicrobial effects. In vivo, injection into mice causes moderate edema formation, but induces very weak or no change in nociceptive sensibility. It also reduces mice locomotion, suggesting an increase in anxiety, but causes no alteration in rearing (standing on hind limbs). This chain is Scorpine-like peptide Tco 41.46-2, found in Tityus costatus (Brazilian scorpion).